Reading from the N-terminus, the 183-residue chain is Ribosome rescue factor SmrB (183 aa).

The region spanning 98 to 173 (LDLHGLTQLQ…GDAALLVLIE (76 aa)) is the Smr domain.

The protein belongs to the SmrB family. In terms of assembly, associates with collided ribosomes, but not with correctly translating polysomes.

Functionally, acts as a ribosome collision sensor. Detects stalled/collided disomes (pairs of ribosomes where the leading ribosome is stalled and a second ribosome has collided with it) and endonucleolytically cleaves mRNA at the 5' boundary of the stalled ribosome. Stalled/collided disomes form a new interface (primarily via the 30S subunits) that binds SmrB. Cleaved mRNA becomes available for tmRNA ligation, leading to ribosomal subunit dissociation and rescue of stalled ribosomes. This Shigella boydii serotype 18 (strain CDC 3083-94 / BS512) protein is Ribosome rescue factor SmrB.